Reading from the N-terminus, the 185-residue chain is Protein FAM219A (185 aa).

At methionine 1 the chain carries N-acetylmethionine. The disordered stretch occupies residues 1–131 (MMEEIDRFQV…SRYSSSGYSS (131 aa)). Serine 47 bears the Phosphoserine mark. Residues 52-61 (KLEKQRELAR) are compositionally biased toward basic and acidic residues. The segment covering 66–80 (KNGSMGSPVNQQPKK) has biased composition (polar residues). Phosphoserine is present on residues serine 72 and serine 102. A Phosphothreonine modification is found at threonine 113. Residues serine 115 and serine 122 each carry the phosphoserine modification. Residues 122–131 (SRYSSSGYSS) show a composition bias toward low complexity.

This sequence belongs to the FAM219 family.

The protein is Protein FAM219A (FAM219A) of Homo sapiens (Human).